The following is a 285-amino-acid chain: Acetyl-coenzyme A carboxylase carboxyl transferase subunit beta (285 aa).

The 257-residue stretch at 29–285 (IMTKCPKCKK…ILKIHQEVTK (257 aa)) folds into the CoA carboxyltransferase N-terminal domain. Positions 33, 36, 52, and 55 each coordinate Zn(2+). The C4-type zinc finger occupies 33–55 (CPKCKKIMYTKELAENLNVCFNC).

The protein belongs to the AccD/PCCB family. As to quaternary structure, acetyl-CoA carboxylase is a heterohexamer composed of biotin carboxyl carrier protein (AccB), biotin carboxylase (AccC) and two subunits each of ACCase subunit alpha (AccA) and ACCase subunit beta (AccD). The cofactor is Zn(2+).

It is found in the cytoplasm. It catalyses the reaction N(6)-carboxybiotinyl-L-lysyl-[protein] + acetyl-CoA = N(6)-biotinyl-L-lysyl-[protein] + malonyl-CoA. It functions in the pathway lipid metabolism; malonyl-CoA biosynthesis; malonyl-CoA from acetyl-CoA: step 1/1. In terms of biological role, component of the acetyl coenzyme A carboxylase (ACC) complex. Biotin carboxylase (BC) catalyzes the carboxylation of biotin on its carrier protein (BCCP) and then the CO(2) group is transferred by the transcarboxylase to acetyl-CoA to form malonyl-CoA. This is Acetyl-coenzyme A carboxylase carboxyl transferase subunit beta from Staphylococcus aureus (strain Newman).